A 101-amino-acid polypeptide reads, in one-letter code: DNA-directed RNA polymerase subunit beta (101 aa).

The interval 74 to 101 (KRRLSALGPGGLSRERAGLEVRDVHSSH) is disordered. Over residues 86 to 101 (SRERAGLEVRDVHSSH) the composition is skewed to basic and acidic residues.

Belongs to the RNA polymerase beta chain family. As to quaternary structure, the RNAP catalytic core consists of 2 alpha, 1 beta, 1 beta' and 1 omega subunit. When a sigma factor is associated with the core the holoenzyme is formed, which can initiate transcription.

The enzyme catalyses RNA(n) + a ribonucleoside 5'-triphosphate = RNA(n+1) + diphosphate. In terms of biological role, DNA-dependent RNA polymerase catalyzes the transcription of DNA into RNA using the four ribonucleoside triphosphates as substrates. This chain is DNA-directed RNA polymerase subunit beta (rpoB), found in Mycolicibacterium peregrinum (Mycobacterium peregrinum).